A 172-amino-acid polypeptide reads, in one-letter code: Large ribosomal subunit protein uL10 (172 aa).

It belongs to the universal ribosomal protein uL10 family. Part of the ribosomal stalk of the 50S ribosomal subunit. The N-terminus interacts with L11 and the large rRNA to form the base of the stalk. The C-terminus forms an elongated spine to which L12 dimers bind in a sequential fashion forming a multimeric L10(L12)X complex.

Forms part of the ribosomal stalk, playing a central role in the interaction of the ribosome with GTP-bound translation factors. This chain is Large ribosomal subunit protein uL10, found in Afipia carboxidovorans (strain ATCC 49405 / DSM 1227 / KCTC 32145 / OM5) (Oligotropha carboxidovorans).